The sequence spans 1077 residues: Adenylate cyclase type 4 (1077 aa).

The Cytoplasmic segment spans residues 1–28 (MARLFSPRPPPSEDLFYETYYSLSQQYP). A run of 6 helical transmembrane segments spans residues 29–50 (LLLLLLGIVLCALAALLAVAWA), 61–80 (FLTTVLCALGGFSLLLGLAS), 94–117 (GLVWVALLALGHAFLFTGGVVSAW), 120–138 (VSYFLFVIFTAYAMLPLGM), 141–162 (AAVAGLASSLSHLLVLGLYLGP), and 170–190 (LLPQLAANAVLFLCGNVAGVY). Residues 191–585 (HKALMERALR…YRLSAIPAFK (395 aa)) lie on the Cytoplasmic side of the membrane. Residues Asp278, Ile279, and Asp322 each coordinate Mg(2+). ATP is bound by residues 278 to 283 (DIVGFT), 320 to 322 (LGD), and Arg366. Residue Ser520 is modified to Phosphoserine. Thr536 bears the Phosphothreonine mark. 3 consecutive transmembrane segments (helical) span residues 586 to 607 (YYEACTFLVFLSNFIIQMLVTN), 611 to 633 (ALAITYSITFLLFLLILFVCFSE), and 664 to 687 (IALGTATILLVFAMAITSLFFFPT). The Extracellular portion of the chain corresponds to 688–714 (SSDCPFQAPNVSSMISNLSWELPGSLP). N-linked (GlcNAc...) asparagine glycans are attached at residues Asn697 and Asn704. 3 consecutive transmembrane segments (helical) span residues 715–736 (LISVPYSMHCCTLGFLSCSLFL), 744–764 (LLLLLLWLAASCSLFLHSHAW), and 791–807 (MGAISFFIFFFTLLVLA). The Cytoplasmic segment spans residues 808–1077 (RQNEYYCRLD…RTGPPSATLG (270 aa)). Residues Lys925, 1005 to 1007 (DIW), 1012 to 1016 (NVASR), and Lys1052 contribute to the ATP site.

This sequence belongs to the adenylyl cyclase class-4/guanylyl cyclase family. Requires Mg(2+) as cofactor. Mn(2+) is required as a cofactor. Detected in the zona glomerulosa and the zona fasciculata in the adrenal gland (at protein level).

The protein resides in the cell membrane. Its subcellular location is the cytoplasm. The enzyme catalyses ATP = 3',5'-cyclic AMP + diphosphate. With respect to regulation, activated by forskolin. Insensitive to calcium/calmodulin. Stimulated by GNAS and by the G-protein beta and gamma subunit complex. Catalyzes the formation of the signaling molecule cAMP in response to G-protein signaling. This Homo sapiens (Human) protein is Adenylate cyclase type 4 (ADCY4).